We begin with the raw amino-acid sequence, 198 residues long: Proteasome subunit beta type-2 (198 aa).

This sequence belongs to the peptidase T1B family. The 26S proteasome consists of a 20S proteasome core and two 19S regulatory subunits. The 20S proteasome core is composed of 28 subunits that are arranged in four stacked rings, resulting in a barrel-shaped structure. The two end rings are each formed by seven alpha subunits, and the two central rings are each formed by seven beta subunits. The catalytic chamber with the active sites is on the inside of the barrel.

It localises to the cytoplasm. The protein resides in the nucleus. Functionally, non-catalytic component of the proteasome, a multicatalytic proteinase complex which is characterized by its ability to cleave peptides with Arg, Phe, Tyr, Leu, and Glu adjacent to the leaving group at neutral or slightly basic pH. The proteasome has an ATP-dependent proteolytic activity. In Dictyostelium discoideum (Social amoeba), this protein is Proteasome subunit beta type-2 (psmB2).